A 315-amino-acid polypeptide reads, in one-letter code: Putative serine/threonine-protein phosphatase PP2A-4 catalytic subunit (315 aa).

Mn(2+)-binding residues include aspartate 63, histidine 65, aspartate 91, and asparagine 123. The Proton donor role is filled by histidine 124. Residues histidine 173 and histidine 247 each contribute to the Mn(2+) site.

Belongs to the PPP phosphatase family. PP-2A subfamily. Requires Mn(2+) as cofactor.

Its subcellular location is the cytoplasm. It carries out the reaction O-phospho-L-seryl-[protein] + H2O = L-seryl-[protein] + phosphate. It catalyses the reaction O-phospho-L-threonyl-[protein] + H2O = L-threonyl-[protein] + phosphate. This Oryza sativa subsp. indica (Rice) protein is Putative serine/threonine-protein phosphatase PP2A-4 catalytic subunit (PP2A4).